Here is a 215-residue protein sequence, read N- to C-terminus: MIKSTIALPSFFIVLILALVNSVAASSSYAPVAISLPAFSKECLYYDMVTEDDSLAVGYQVLTGGNFEIDFDITAPDGSVITSEKQKKYSDFLLKSFGVGKYTFCFSNNYGTALKKVEITLEKEKTLTDEHEADVNNDDIIANNAVEEIDRNLNKITKTLNYLRAREWRNMSTVNSTESRLTWLSILIIIIIAVISIAQVLLIQFLFTGRQKNYV.

The signal sequence occupies residues 1 to 25 (MIKSTIALPSFFIVLILALVNSVAA). At 26–182 (SSSYAPVAIS…TVNSTESRLT (157 aa)) the chain is on the lumenal side. A GOLD domain is found at 41–123 (KECLYYDMVT…LKKVEITLEK (83 aa)). Residues 183 to 203 (WLSILIIIIIAVISIAQVLLI) form a helical membrane-spanning segment. The Cytoplasmic portion of the chain corresponds to 204-215 (QFLFTGRQKNYV).

This sequence belongs to the EMP24/GP25L family. Associates with EMP24, ERV25 and ERP1.

Its subcellular location is the endoplasmic reticulum membrane. Its function is as follows. Involved in vesicular protein trafficking. This Saccharomyces cerevisiae (strain ATCC 204508 / S288c) (Baker's yeast) protein is Protein ERP2 (ERP2).